The following is a 58-amino-acid chain: Enterocin-HF (58 aa).

Residues 1–15 (MEKLTVKEMSQVVGG) constitute a propeptide that is removed on maturation. An intrachain disulfide couples C24 to C29.

It localises to the secreted. Functionally, bacteriocin. This is Enterocin-HF (entHF) from Enterococcus faecium (Streptococcus faecium).